Here is a 267-residue protein sequence, read N- to C-terminus: 4-hydroxy-tetrahydrodipicolinate reductase (267 aa).

Residues 8 to 13 (GAAGRM) and Asp34 each bind NAD(+). Arg35 contributes to the NADP(+) binding site. NAD(+) contacts are provided by residues 98–100 (GTT) and 122–125 (AANF). His155 functions as the Proton donor/acceptor in the catalytic mechanism. His156 serves as a coordination point for (S)-2,3,4,5-tetrahydrodipicolinate. Residue Lys159 is the Proton donor of the active site. (S)-2,3,4,5-tetrahydrodipicolinate is bound at residue 165–166 (GT).

The protein belongs to the DapB family.

Its subcellular location is the cytoplasm. The catalysed reaction is (S)-2,3,4,5-tetrahydrodipicolinate + NAD(+) + H2O = (2S,4S)-4-hydroxy-2,3,4,5-tetrahydrodipicolinate + NADH + H(+). It carries out the reaction (S)-2,3,4,5-tetrahydrodipicolinate + NADP(+) + H2O = (2S,4S)-4-hydroxy-2,3,4,5-tetrahydrodipicolinate + NADPH + H(+). It functions in the pathway amino-acid biosynthesis; L-lysine biosynthesis via DAP pathway; (S)-tetrahydrodipicolinate from L-aspartate: step 4/4. Functionally, catalyzes the conversion of 4-hydroxy-tetrahydrodipicolinate (HTPA) to tetrahydrodipicolinate. This chain is 4-hydroxy-tetrahydrodipicolinate reductase, found in Pseudomonas putida (strain ATCC 47054 / DSM 6125 / CFBP 8728 / NCIMB 11950 / KT2440).